The primary structure comprises 65 residues: MPKIKTVRGAAKRFKKTGKGGFKHKHANLRHILTKKATKRKRHLRPKAMVSKGDLGLIIACLPYA.

The disordered stretch occupies residues 1-22 (MPKIKTVRGAAKRFKKTGKGGF). Basic residues predominate over residues 10-22 (AAKRFKKTGKGGF).

It belongs to the bacterial ribosomal protein bL35 family.

The chain is Large ribosomal subunit protein bL35 from Escherichia coli O127:H6 (strain E2348/69 / EPEC).